A 499-amino-acid chain; its full sequence is Gamma-aminobutyric acid receptor subunit beta (499 aa).

Residues 1-23 (MWGIIVPFFSASLMCSLVAVVRC) form the signal peptide. The Extracellular segment spans residues 24-251 (QQDTDHFANV…IFQLQRNIGY (228 aa)). N-linked (GlcNAc...) asparagine glycans are attached at residues asparagine 32, asparagine 98, asparagine 106, and asparagine 152. A disulfide bridge links cysteine 167 with cysteine 181. A run of 3 helical transmembrane segments spans residues 252–273 (FIFQ…SFWI), 278–299 (TSAR…SNGV), and 311–333 (AIDI…YAAV). The Cytoplasmic segment spans residues 334–475 (NYTYWGARAK…RVQDVNTIDK (142 aa)). Residues 476–499 (YARLMFPLLFIIFNTSYWSVYLLT) form a helical membrane-spanning segment.

Belongs to the ligand-gated ion channel (TC 1.A.9) family. Gamma-aminobutyric acid receptor (TC 1.A.9.5) subfamily. As to quaternary structure, generally pentameric. There are five types of GABA(A) receptor chains: alpha, beta, gamma, delta, and rho.

It is found in the postsynaptic cell membrane. It localises to the cell membrane. Functionally, GABA, an inhibitory neurotransmitter, mediates neuronal inhibition by binding to the GABA/benzodiazepine receptor and opening an integral chloride channel. This Lymnaea stagnalis (Great pond snail) protein is Gamma-aminobutyric acid receptor subunit beta.